A 51-amino-acid polypeptide reads, in one-letter code: Insulin (51 aa).

Intrachain disulfides connect cysteine 7-cysteine 37, cysteine 19-cysteine 50, and cysteine 36-cysteine 41.

The protein belongs to the insulin family. Heterodimer of a B chain and an A chain linked by two disulfide bonds.

The protein localises to the secreted. In terms of biological role, insulin decreases blood glucose concentration. It increases cell permeability to monosaccharides, amino acids and fatty acids. It accelerates glycolysis, the pentose phosphate cycle, and glycogen synthesis in liver. The protein is Insulin (INS) of Ptyas dhumnades (Big-eyed ratsnake).